Reading from the N-terminus, the 354-residue chain is Phosphatidylserine decarboxylase proenzyme (354 aa).

A helical membrane pass occupies residues 18 to 36 (YLITGVTILSFILMFQYKY). Catalysis depends on charge relay system; for autoendoproteolytic cleavage activity residues aspartate 139, histidine 198, and serine 308. Serine 308 (schiff-base intermediate with substrate; via pyruvic acid; for decarboxylase activity) is an active-site residue. Serine 308 carries the pyruvic acid (Ser); by autocatalysis modification.

It belongs to the phosphatidylserine decarboxylase family. PSD-B subfamily. Eukaryotic type I sub-subfamily. Heterodimer of a large membrane-associated beta subunit and a small pyruvoyl-containing alpha subunit. It depends on pyruvate as a cofactor. Is synthesized initially as an inactive proenzyme. Formation of the active enzyme involves a self-maturation process in which the active site pyruvoyl group is generated from an internal serine residue via an autocatalytic post-translational modification. Two non-identical subunits are generated from the proenzyme in this reaction, and the pyruvate is formed at the N-terminus of the alpha chain, which is derived from the carboxyl end of the proenzyme. The autoendoproteolytic cleavage occurs by a canonical serine protease mechanism, in which the side chain hydroxyl group of the serine supplies its oxygen atom to form the C-terminus of the beta chain, while the remainder of the serine residue undergoes an oxidative deamination to produce ammonia and the pyruvoyl prosthetic group on the alpha chain. During this reaction, the Ser that is part of the protease active site of the proenzyme becomes the pyruvoyl prosthetic group, which constitutes an essential element of the active site of the mature decarboxylase.

It is found in the membrane. Its subcellular location is the endoplasmic reticulum membrane. The enzyme catalyses a 1,2-diacyl-sn-glycero-3-phospho-L-serine + H(+) = a 1,2-diacyl-sn-glycero-3-phosphoethanolamine + CO2. It functions in the pathway phospholipid metabolism; phosphatidylethanolamine biosynthesis; phosphatidylethanolamine from CDP-diacylglycerol: step 2/2. Protease activity is inhibited by PMSF. In terms of biological role, catalyzes the formation of phosphatidylethanolamine (PtdEtn) from phosphatidylserine (PtdSer). Plays a central role in phospholipid metabolism and in the interorganelle trafficking of phosphatidylserine. The polypeptide is Phosphatidylserine decarboxylase proenzyme (Plasmodium knowlesi (strain H)).